The primary structure comprises 200 residues: Transgelin (200 aa).

Alanine 2 is subject to N-acetylalanine. A Calponin-homology (CH) domain is found at 24–137; sequence DELEDRLVEW…RTLVALGSLA (114 aa). One copy of the Calponin-like repeat lies at 175 to 199; it reads IGLQMGTNKGASQAGMSYGRPRQII.

Belongs to the calponin family. As to quaternary structure, monomer. Gizzard, uterus, intestine, esophagus, aorta, and trace amounts in brain, liver and heart.

The protein resides in the cytoplasm. Its function is as follows. Actin cross-linking/gelling protein. The polypeptide is Transgelin (TAGLN) (Gallus gallus (Chicken)).